The primary structure comprises 106 residues: MQNMEELYELIKQRKATPKKGSYTDYLFTKGLDKILKKVGEESTEVIVAAKNPGDDELTYETADLLYHVLVLLVERGVSFDQIKQELAKREGKMSDYKDRPEIKNL.

Belongs to the PRA-PH family.

Its subcellular location is the cytoplasm. The enzyme catalyses 1-(5-phospho-beta-D-ribosyl)-ATP + H2O = 1-(5-phospho-beta-D-ribosyl)-5'-AMP + diphosphate + H(+). The protein operates within amino-acid biosynthesis; L-histidine biosynthesis; L-histidine from 5-phospho-alpha-D-ribose 1-diphosphate: step 2/9. This Lactiplantibacillus plantarum (strain ATCC BAA-793 / NCIMB 8826 / WCFS1) (Lactobacillus plantarum) protein is Phosphoribosyl-ATP pyrophosphatase.